The primary structure comprises 478 residues: Methionine aminopeptidase 2 (478 aa).

The tract at residues 1 to 122 is disordered; sequence MAGVEQAASF…TDPPSVPICD (122 aa). The residue at position 2 (Ala-2) is an N-acetylalanine. The span at 36–46 shows a compositional bias: basic residues; sequence KKKRRKKKKGK. The residue at position 60 (Ser-60) is a Phosphoserine; alternate. Ser-60 carries O-linked (GlcNAc) serine; alternate glycosylation. Over residues 80 to 92 the composition is skewed to acidic residues; it reads ERDDDDEDGDGDA. Over residues 97–109 the composition is skewed to basic residues; it reads GKKKKKKKKKRGP. Position 231 (His-231) interacts with substrate. A divalent metal cation is bound by residues Asp-251, Asp-262, and His-331. His-339 is a binding site for substrate. Positions 364 and 459 each coordinate a divalent metal cation.

Belongs to the peptidase M24A family. Methionine aminopeptidase eukaryotic type 2 subfamily. Binds EIF2S1 at low magnesium concentrations. Interacts strongly with the eIF-2 gamma-subunit EIF2S3. Co(2+) serves as cofactor. The cofactor is Zn(2+). It depends on Mn(2+) as a cofactor. Fe(2+) is required as a cofactor. In terms of processing, contains approximately 12 O-linked N-acetylglucosamine (GlcNAc) residues. O-glycosylation is required for EIF2S1 binding.

Its subcellular location is the cytoplasm. The enzyme catalyses Release of N-terminal amino acids, preferentially methionine, from peptides and arylamides.. Cotranslationally removes the N-terminal methionine from nascent proteins. The N-terminal methionine is often cleaved when the second residue in the primary sequence is small and uncharged (Met-Ala-, Cys, Gly, Pro, Ser, Thr, or Val). In terms of biological role, protects eukaryotic initiation factor EIF2S1 from translation-inhibiting phosphorylation by inhibitory kinases such as EIF2AK2/PKR and EIF2AK1/HCR. Plays a critical role in the regulation of protein synthesis. This Mus musculus (Mouse) protein is Methionine aminopeptidase 2 (Metap2).